A 278-amino-acid polypeptide reads, in one-letter code: Large ribosomal subunit protein uL2 (278 aa).

2 disordered regions span residues Met1–His53 and Val224–Arg278. Residues Glu23–Leu33 show a composition bias toward basic and acidic residues. Positions Arg258–Met267 are enriched in polar residues. Over residues Val269–Arg278 the composition is skewed to basic residues.

The protein belongs to the universal ribosomal protein uL2 family. As to quaternary structure, part of the 50S ribosomal subunit. Forms a bridge to the 30S subunit in the 70S ribosome.

One of the primary rRNA binding proteins. Required for association of the 30S and 50S subunits to form the 70S ribosome, for tRNA binding and peptide bond formation. It has been suggested to have peptidyltransferase activity; this is somewhat controversial. Makes several contacts with the 16S rRNA in the 70S ribosome. In Corynebacterium aurimucosum (strain ATCC 700975 / DSM 44827 / CIP 107346 / CN-1) (Corynebacterium nigricans), this protein is Large ribosomal subunit protein uL2.